Here is a 264-residue protein sequence, read N- to C-terminus: uncharacterized protein (264 aa).

The helical transmembrane segment at 7-27 threads the bilayer; sequence LTLGICLVLLIILIVGYVIMT.

This sequence belongs to the staphylococcal tandem lipoprotein family.

It localises to the cell membrane. This is an uncharacterized protein from Staphylococcus aureus (strain NCTC 8325 / PS 47).